The sequence spans 204 residues: MVEVGGGAAEAAAGRRWRLADERCDLRAAETEYVRRFHRHEPRDHQCSSAVAKHIKAPVHLVWSLVRRFDQPQLFKPFVSRCEMKGNIEIGSVREVNVKSGLPATRSTERLELLDDNEHILSVRFVGGDHRLKNYSSILTVHPEVIDGRPGTLVIESFVVDVPEGNTKDETCYFVEALLKCNLKSLAEVSERLVVKDQTEPLDR.

Positions 40–191 (HEPRDHQCSS…NLKSLAEVSE (152 aa)) are START-like. A disulfide bridge links C47 with C172. Abscisate is bound by residues K76, 104–109 (ATRSTE), 131–137 (RLKNYSS), and E156. The Gate loop motif lies at 100-104 (SGLPA). Residues 130 to 132 (HRL) carry the Latch loop motif.

It belongs to the PYR/PYL/RCAR abscisic acid intracellular receptor family. In terms of assembly, monomer. Interacts with PP2C50. Binding to PP2C50 is dependent on the presence of abscisic acid (ABA). Interacts with PP2C30 and PP2C53.

The protein localises to the cytoplasm. It localises to the cytosol. It is found in the nucleus. Functionally, involved in abscisic acid (ABA) signaling during seed germination and abiotic stress response. Acts as a positive regulator of ABA-mediated inhibition of seed germination, and tolerance to drought and cold stresses. Together with PP2C50 and SAPK10, may form an ABA signaling module involved in stress response. Inhibits the protein phosphatases PP2C06 and PP2C09 when activated by abscisic acid (ABA). The sequence is that of Abscisic acid receptor PYL3 from Oryza sativa subsp. japonica (Rice).